The sequence spans 147 residues: Hemoglobin subunit beta (147 aa).

A Globin domain is found at 3–147; that stretch reads EWTDDERAII…VVSALGRQYH (145 aa). Residues H64 and H93 each contribute to the heme b site.

Belongs to the globin family. As to quaternary structure, heterotetramer of two alpha chains and two beta chains. As to expression, red blood cells.

Involved in oxygen transport from gills to the various peripheral tissues. The polypeptide is Hemoglobin subunit beta (hbb) (Merlangius merlangus (Whiting)).